The primary structure comprises 312 residues: Glycerol 2-dehydrogenase (NADP(+)) (312 aa).

Tyr-56 (proton donor) is an active-site residue. His-112 serves as a coordination point for substrate. 220–274 (SPLGSTDAPLLKEPVILEIAKKNNVQPGHVVISWHVQRGYVVLPKSVNPDRIKTN) lines the NADP(+) pocket. At Ser-306 the chain carries Phosphoserine.

This sequence belongs to the aldo/keto reductase family.

The protein localises to the cytoplasm. The enzyme catalyses glycerol + NADP(+) = dihydroxyacetone + NADPH + H(+). Glycerol dehydrogenase involved in glycerol catabolism under microaerobic conditions. Has mRNA binding activity. This is Glycerol 2-dehydrogenase (NADP(+)) (GCY1) from Saccharomyces cerevisiae (strain ATCC 204508 / S288c) (Baker's yeast).